The primary structure comprises 322 residues: Arginase-1 (322 aa).

The segment at 1-27 (MSFKSQSIGIIGAPFSKGQPRGGVEEG) is disordered. Ser7 carries the post-translational modification Phosphoserine. At Lys17 the chain carries N6-succinyllysine. Ser72 is modified (phosphoserine). The residue at position 75 (Lys75) is an N6-succinyllysine. His101, Asp124, His126, and Asp128 together coordinate Mn(2+). Residues 126–130 (HTDIN) and 137–139 (TGN) contribute to the substrate site. A Phosphoserine modification is found at Ser163. Substrate is bound at residue Asp183. Ser217 carries the phosphoserine modification. Mn(2+) is bound by residues Asp232 and Asp234. Residues Thr246 and Glu277 each coordinate substrate.

It belongs to the arginase family. In terms of assembly, homotrimer. Interacts with CMTM6. Requires Mn(2+) as cofactor.

It is found in the cytoplasm. The enzyme catalyses L-arginine + H2O = urea + L-ornithine. The protein operates within nitrogen metabolism; urea cycle; L-ornithine and urea from L-arginine: step 1/1. This Sus scrofa (Pig) protein is Arginase-1 (ARG1).